Here is a 311-residue protein sequence, read N- to C-terminus: Olfactory receptor 1D4 (311 aa).

Residues 1 to 25 (MDGDNQSENSQFLLLGISESPEQQQ) are Extracellular-facing. N-linked (GlcNAc...) asparagine glycosylation occurs at Asn-5. Residues 26–49 (ILFWMFLSMYLVTVLGNVLIILAI) form a helical membrane-spanning segment. Topologically, residues 50-57 (SSDSHLHT) are cytoplasmic. A helical transmembrane segment spans residues 58–79 (PMYFFLANLSFTDLFFVTNTIP). At 80-100 (KMLVNFQSQNKAISYAGCLTQ) the chain is on the extracellular side. The cysteines at positions 97 and 189 are disulfide-linked. Residues 101–120 (LYFLVSLVTLDNLILAVMAY) form a helical membrane-spanning segment. The Cytoplasmic portion of the chain corresponds to 121-140 (DRYVAICCPLHYVTAMSPGL). Residues 141 to 158 (CVLLLSLCWGLSVLYGLL) traverse the membrane as a helical segment. At 159–196 (LTFLLTRVTFCGPREIHYLFCDMYILLWLACSNTHIIH) the chain is on the extracellular side. Residues 197-220 (TALIATGCFIFLTLLGFMTTSYVR) form a helical membrane-spanning segment. At 221-237 (IVRTILQMPSASKKYKT) the chain is on the cytoplasmic side. The chain crosses the membrane as a helical span at residues 238–260 (FSTCASHLGVVSLFYGTLAMVYL). The Extracellular portion of the chain corresponds to 261–271 (QPLHTYSMKDS). The helical transmembrane segment at 272–291 (VATVMYAVLTPMMNPFIYSL) threads the bilayer. Residues 292-311 (RNKDMHGAPGRVLWRPFQRP) are Cytoplasmic-facing.

The protein belongs to the G-protein coupled receptor 1 family.

The protein resides in the cell membrane. Functionally, odorant receptor. This Homo sapiens (Human) protein is Olfactory receptor 1D4 (OR1D4).